The sequence spans 326 residues: Probable cell division protein WhiA (326 aa).

Residues 275-308 constitute a DNA-binding region (H-T-H motif); sequence SLDELGRLADPPMTKDAIAGRIRRLLAMADKRAS.

Belongs to the WhiA family.

Involved in cell division and chromosome segregation. The chain is Probable cell division protein WhiA from Renibacterium salmoninarum (strain ATCC 33209 / DSM 20767 / JCM 11484 / NBRC 15589 / NCIMB 2235).